The primary structure comprises 613 residues: DNA mismatch repair protein MutL (613 aa).

The protein belongs to the DNA mismatch repair MutL/HexB family.

Its function is as follows. This protein is involved in the repair of mismatches in DNA. It is required for dam-dependent methyl-directed DNA mismatch repair. May act as a 'molecular matchmaker', a protein that promotes the formation of a stable complex between two or more DNA-binding proteins in an ATP-dependent manner without itself being part of a final effector complex. The protein is DNA mismatch repair protein MutL of Bradyrhizobium sp. (strain ORS 278).